Consider the following 562-residue polypeptide: MVKSKIYIDKIYWERVQLFVEGHSENLDLEDSNFVLRNLTETRTMKANDVKIDGNQFVCRFNVAILDNGYYLPEDKYLLVNEQELDYIAQLNPDVINDAYQNLKPEQEEEYNELETQNGKINFLLQTYLKEFRKGGISKKTVYTVTPEISSDVNEFVLDVVVTTPEVKSIYIVRKYKELRKYFRKQSFNTRQFIFKAIFNTTKFFHLKKGNTVLFTSDSRPTMSGNFEYIYNEMLRQNLDKKYDIHTVFKANITDRRGIIDKFRLPYLLGKADYIFVDDFHPLIYTVRFRRSQEVIQVWHAVGAFKTVGFSRTGKKGGPFIDSLNHRSYTKAYVSSETDIPFYAEAFGIKEKNVVPTGVPRTDVLFDEAYATQIKQEMEDELPIIKGKKVILFAPTFRGSGHGTAHYPFFKIDFERLARYCEKNNAVVLFKMHPFVKNRLNIADKHKQYFVDVSDFREVNDILFITDLLISDYSSLIYEYAVFKKPMIFYAFDLEDYITTRDFYEPYESFVPGKIVQSFDALMDALDNEDYEGEKVIPFLDKHFKYQDGRSSERLVRNLFGS.

Belongs to the CDP-glycerol glycerophosphotransferase family.

Its subcellular location is the cell membrane. The enzyme catalyses 4-O-[di(2R)-glycerylphospho]-N-acetyl-beta-D-mannosaminyl-(1-&gt;4)-N-acetyl-alpha-D-glucosaminyl di-trans,octa-cis-undecaprenyl diphosphate + n CDP-L-ribitol = 4-O-[(D-ribitylphospho)(n)-di{(2R)-glycerylphospho}]-N-acetyl-beta-D-mannosaminyl-(1-&gt;4)-N-acetyl-alpha-D-glucosaminyl di-trans,octa-cis-undecaprenyl diphosphate + n CMP + n H(+). It participates in cell wall biogenesis; poly(ribitol phosphate) teichoic acid biosynthesis. Functionally, responsible for the polymerization of the main chain of the major teichoic acid by sequential transfer of ribitol phosphate units from CDP-ribitol to the second glycerol phosphate attached to the disaccharide linkage unit. Synthesizes polymers of more than 40 ribitol phosphate units in length. This chain is Teichoic acid ribitol-phosphate polymerase TarL (tarL), found in Staphylococcus aureus (strain NCTC 8325 / PS 47).